The following is a 329-amino-acid chain: Alpha-tubulin N-acetyltransferase 1 (329 aa).

Residues 5–185 (SQVALLPKLS…NNFVVFHRYF (181 aa)) enclose the N-acetyltransferase domain. Residues 119 to 132 (FFVDTSFQRKGFGK) and 155 to 164 (SVKFLAFLQK) contribute to the acetyl-CoA site. Disordered stretches follow at residues 218-261 (PKYQ…GVGK) and 306-329 (GARRRMSPTRSGVQYNIISGTPEH). Over residues 220 to 229 (YQSTTGPNNN) the composition is skewed to polar residues. Over residues 238–249 (TPPPPPLPPPLV) the composition is skewed to pro residues. The span at 313–329 (PTRSGVQYNIISGTPEH) shows a compositional bias: polar residues.

This sequence belongs to the acetyltransferase ATAT1 family.

The enzyme catalyses L-lysyl-[alpha-tubulin] + acetyl-CoA = N(6)-acetyl-L-lysyl-[alpha-tubulin] + CoA + H(+). Specifically acetylates 'Lys-40' in alpha-tubulin on the lumenal side of microtubules. Promotes microtubule destabilization and accelerates microtubule dynamics; this activity may be independent of acetylation activity. Acetylates alpha-tubulin with a slow enzymatic rate, due to a catalytic site that is not optimized for acetyl transfer. Enters the microtubule through each end and diffuses quickly throughout the lumen of microtubules. Acetylates only long/old microtubules because of its slow acetylation rate since it does not have time to act on dynamically unstable microtubules before the enzyme is released. This is Alpha-tubulin N-acetyltransferase 1 from Trypanosoma cruzi (strain CL Brener).